The primary structure comprises 303 residues: Glycine--tRNA ligase alpha subunit (303 aa).

The protein belongs to the class-II aminoacyl-tRNA synthetase family. In terms of assembly, tetramer of two alpha and two beta subunits.

The protein localises to the cytoplasm. It carries out the reaction tRNA(Gly) + glycine + ATP = glycyl-tRNA(Gly) + AMP + diphosphate. The chain is Glycine--tRNA ligase alpha subunit from Syntrophomonas wolfei subsp. wolfei (strain DSM 2245B / Goettingen).